Here is a 154-residue protein sequence, read N- to C-terminus: MAKIILRHLIETPVRYQEEFEARGLEDCRLDHTLYALPGPTIEDLSKARGAGTPQALAEDSASTEKPPGEGKSRFQILLDVVQFLPEDIIIQTFEGWLLIKAQHGTRMDEHGFISRSFTRQYKLPDGVETKDLSAILCHDGILVVEVKDSLGTK.

The tract at residues 48-71 (ARGAGTPQALAEDSASTEKPPGEG) is disordered. The sHSP domain maps to 57 to 154 (LAEDSASTEK…VEVKDSLGTK (98 aa)).

Belongs to the small heat shock protein (HSP20) family.

It is found in the cytoplasm. Its subcellular location is the nucleus. Functionally, inhibitor of actin polymerization. The chain is Heat shock protein beta-3 (Hspb3) from Mus musculus (Mouse).